A 304-amino-acid chain; its full sequence is UDP-N-acetylenolpyruvoylglucosamine reductase (304 aa).

The FAD-binding PCMH-type domain occupies 34-198 (IGGKADFLVW…LEVVFALQPG (165 aa)). The active site involves R177. Residue S227 is the Proton donor of the active site. Residue E297 is part of the active site.

It belongs to the MurB family. Requires FAD as cofactor.

The protein localises to the cytoplasm. The catalysed reaction is UDP-N-acetyl-alpha-D-muramate + NADP(+) = UDP-N-acetyl-3-O-(1-carboxyvinyl)-alpha-D-glucosamine + NADPH + H(+). The protein operates within cell wall biogenesis; peptidoglycan biosynthesis. Its function is as follows. Cell wall formation. In Geobacillus thermodenitrificans (strain NG80-2), this protein is UDP-N-acetylenolpyruvoylglucosamine reductase.